Reading from the N-terminus, the 446-residue chain is Exodeoxyribonuclease 7 large subunit (446 aa).

It belongs to the XseA family. In terms of assembly, heterooligomer composed of large and small subunits.

It localises to the cytoplasm. The enzyme catalyses Exonucleolytic cleavage in either 5'- to 3'- or 3'- to 5'-direction to yield nucleoside 5'-phosphates.. Bidirectionally degrades single-stranded DNA into large acid-insoluble oligonucleotides, which are then degraded further into small acid-soluble oligonucleotides. In Streptococcus thermophilus (strain ATCC BAA-250 / LMG 18311), this protein is Exodeoxyribonuclease 7 large subunit.